The sequence spans 840 residues: Heat shock 70 kDa protein 4 (840 aa).

At Lys53 the chain carries N6-acetyllysine. Ser76 carries the phosphoserine modification. A phosphotyrosine mark is found at Tyr89 and Tyr336. Phosphoserine is present on residues Ser393 and Ser415. Lys430 is subject to N6-acetyllysine. The tract at residues 500-575 (VHKSEENEEP…QAKKAKVKTS (76 aa)) is disordered. Over residues 514 to 533 (QNAKEEEKMQVDQEEPHVEE) the composition is skewed to basic and acidic residues. Thr538 bears the Phosphothreonine mark. Ser546 and Ser647 each carry phosphoserine. Position 660 is a phosphotyrosine (Tyr660). N6-acetyllysine is present on Lys679. Position 756 is a phosphoserine (Ser756). Lys773 is subject to N6-methyllysine. The segment at 779–840 (CSPIISKPKP…DKKLPEMDID (62 aa)) is disordered. Basic and acidic residues-rich tracts occupy residues 788 to 799 (PKVEPPKEEQKN) and 829 to 840 (DSDKKLPEMDID).

This sequence belongs to the heat shock protein 70 family. Interacts with TJP1/ZO-1.

The protein localises to the cytoplasm. In Homo sapiens (Human), this protein is Heat shock 70 kDa protein 4 (HSPA4).